The primary structure comprises 32 residues: Photosystem II reaction center protein T (32 aa).

The helical transmembrane segment at 3 to 23 (ALVYTFLLIGTLMVIFFAVFF) threads the bilayer.

It belongs to the PsbT family. In terms of assembly, PSII is composed of 1 copy each of membrane proteins PsbA, PsbB, PsbC, PsbD, PsbE, PsbF, PsbH, PsbI, PsbJ, PsbK, PsbL, PsbM, PsbT, PsbX, PsbY, PsbZ, Psb30/Ycf12, at least 3 peripheral proteins of the oxygen-evolving complex and a large number of cofactors. It forms dimeric complexes.

It is found in the plastid. Its subcellular location is the chloroplast thylakoid membrane. In terms of biological role, found at the monomer-monomer interface of the photosystem II (PS II) dimer, plays a role in assembly and dimerization of PSII. PSII is a light-driven water plastoquinone oxidoreductase, using light energy to abstract electrons from H(2)O, generating a proton gradient subsequently used for ATP formation. This chain is Photosystem II reaction center protein T, found in Thalassiosira pseudonana (Marine diatom).